The primary structure comprises 202 residues: Dephospho-CoA kinase (202 aa).

Positions 5-202 (IVGLTGGIAS…DADYRARSDR (198 aa)) constitute a DPCK domain. Residue 13–18 (ASGKSA) participates in ATP binding.

The protein belongs to the CoaE family.

Its subcellular location is the cytoplasm. It carries out the reaction 3'-dephospho-CoA + ATP = ADP + CoA + H(+). It functions in the pathway cofactor biosynthesis; coenzyme A biosynthesis; CoA from (R)-pantothenate: step 5/5. Its function is as follows. Catalyzes the phosphorylation of the 3'-hydroxyl group of dephosphocoenzyme A to form coenzyme A. In Xanthomonas oryzae pv. oryzae (strain MAFF 311018), this protein is Dephospho-CoA kinase.